We begin with the raw amino-acid sequence, 107 residues long: Thiosulfate sulfurtransferase GlpE (107 aa).

The Rhodanese domain maps to 19-107 (QDLNAVLVDI…WHKAGLPVEK (89 aa)). Residue cysteine 67 is the Cysteine persulfide intermediate of the active site.

It belongs to the GlpE family.

It is found in the cytoplasm. The enzyme catalyses thiosulfate + hydrogen cyanide = thiocyanate + sulfite + 2 H(+). It carries out the reaction thiosulfate + [thioredoxin]-dithiol = [thioredoxin]-disulfide + hydrogen sulfide + sulfite + 2 H(+). Its function is as follows. Transferase that catalyzes the transfer of sulfur from thiosulfate to thiophilic acceptors such as cyanide or dithiols. May function in a CysM-independent thiosulfate assimilation pathway by catalyzing the conversion of thiosulfate to sulfite, which can then be used for L-cysteine biosynthesis. This Aliivibrio fischeri (strain MJ11) (Vibrio fischeri) protein is Thiosulfate sulfurtransferase GlpE.